Reading from the N-terminus, the 114-residue chain is rRNA-processing protein cgrA (114 aa).

Polar residues predominate over residues 1–11; the sequence is MSSAIPTSSVN. A disordered region spans residues 1–114; that stretch reads MSSAIPTSSV…REKRNKLLHS (114 aa). Residues 39 to 93 show a composition bias toward basic and acidic residues; the sequence is YEKRLEARKRQEAVKEHERELREEKEAERKAQIQKIKDRRAAKEEKERYEKMAEK. A coiled-coil region spans residues 40-101; the sequence is EKRLEARKRQ…EKMHRKRVER (62 aa). The segment covering 94-114 has biased composition (basic residues); the sequence is MHRKRVERLKRREKRNKLLHS.

This sequence belongs to the CGR1 family.

The protein resides in the nucleus. It localises to the nucleolus. Involved in nucleolar integrity and required for processing of the pre-rRNA for the 60S ribosome subunit. In Aspergillus fumigatus (strain ATCC MYA-4609 / CBS 101355 / FGSC A1100 / Af293) (Neosartorya fumigata), this protein is rRNA-processing protein cgrA (cgrA).